We begin with the raw amino-acid sequence, 93 residues long: Small ribosomal subunit protein bS20c (93 aa).

This sequence belongs to the bacterial ribosomal protein bS20 family.

It localises to the plastid. The protein resides in the chloroplast. In terms of biological role, binds directly to 16S ribosomal RNA. In Trieres chinensis (Marine centric diatom), this protein is Small ribosomal subunit protein bS20c.